A 129-amino-acid chain; its full sequence is Small ribosomal subunit protein uS11 (129 aa).

It belongs to the universal ribosomal protein uS11 family. In terms of assembly, part of the 30S ribosomal subunit. Interacts with proteins S7 and S18. Binds to IF-3.

Located on the platform of the 30S subunit, it bridges several disparate RNA helices of the 16S rRNA. Forms part of the Shine-Dalgarno cleft in the 70S ribosome. This chain is Small ribosomal subunit protein uS11, found in Bacteroides thetaiotaomicron (strain ATCC 29148 / DSM 2079 / JCM 5827 / CCUG 10774 / NCTC 10582 / VPI-5482 / E50).